Here is a 165-residue protein sequence, read N- to C-terminus: uncharacterized protein (165 aa).

Positions 1-25 are cleaved as a signal peptide; it reads MKRVLFSVIVFTAVGFTFCQSKAHA.

This is an uncharacterized protein from Bacillus subtilis (strain 168).